Here is a 245-residue protein sequence, read N- to C-terminus: Fumarate reductase iron-sulfur subunit (245 aa).

Residues 17-98 (PQSAVNKPHF…NGVITLMPMP (82 aa)) form the 2Fe-2S ferredoxin-type domain. [2Fe-2S] cluster is bound by residues Cys60, Cys65, Cys68, and Cys80. A 4Fe-4S ferredoxin-type domain is found at 145–174 (AQEVFELDRCIECGCCIASCGTKLMRPNFI). Cys154, Cys157, and Cys160 together coordinate [4Fe-4S] cluster. Residues Cys164, Cys211, and Cys217 each contribute to the [3Fe-4S] cluster site. Position 221 (Cys221) interacts with [4Fe-4S] cluster.

Belongs to the succinate dehydrogenase/fumarate reductase iron-sulfur protein family. In terms of assembly, part of an enzyme complex containing three subunits: a flavoprotein (frdA), an iron-sulfur protein (frdB), and diheme cytochrome b (frdC). It depends on [2Fe-2S] cluster as a cofactor. [3Fe-4S] cluster is required as a cofactor. [4Fe-4S] cluster serves as cofactor.

It catalyses the reaction a menaquinone + succinate = a menaquinol + fumarate. This chain is Fumarate reductase iron-sulfur subunit (frdB), found in Helicobacter pylori (strain J99 / ATCC 700824) (Campylobacter pylori J99).